The sequence spans 372 residues: RNA polymerase sigma factor SigA (372 aa).

The tract at residues 139–209 (LAEANLRLVV…TRAIADQART (71 aa)) is sigma-70 factor domain-2. The Interaction with polymerase core subunit RpoC signature appears at 163–166 (DLIQ). A sigma-70 factor domain-3 region spans residues 218-294 (ETINKLIRVQ…DQDALAPSDA (77 aa)). Residues 307 to 360 (VLDTLTDREENVLRLRFGLDDGRTRTLEEVGKVFGVTRERIRQIEAKALRKLRH) form a sigma-70 factor domain-4 region. The segment at residues 333–352 (LEEVGKVFGVTRERIRQIEA) is a DNA-binding region (H-T-H motif).

The protein belongs to the sigma-70 factor family. RpoD/SigA subfamily. Interacts transiently with the RNA polymerase catalytic core.

Its subcellular location is the cytoplasm. Functionally, sigma factors are initiation factors that promote the attachment of RNA polymerase to specific initiation sites and are then released. This sigma factor is the primary sigma factor during exponential growth. This is RNA polymerase sigma factor SigA from Halalkalibacterium halodurans (strain ATCC BAA-125 / DSM 18197 / FERM 7344 / JCM 9153 / C-125) (Bacillus halodurans).